Reading from the N-terminus, the 426-residue chain is Histidine--tRNA ligase (426 aa).

This sequence belongs to the class-II aminoacyl-tRNA synthetase family. As to quaternary structure, homodimer.

It is found in the cytoplasm. The enzyme catalyses tRNA(His) + L-histidine + ATP = L-histidyl-tRNA(His) + AMP + diphosphate + H(+). The polypeptide is Histidine--tRNA ligase (Streptococcus equi subsp. zooepidemicus (strain MGCS10565)).